The primary structure comprises 160 residues: 6,7-dimethyl-8-ribityllumazine synthase (160 aa).

Residues Phe-23, 61–63 (SFE), and 85–87 (AVI) contribute to the 5-amino-6-(D-ribitylamino)uracil site. 90–91 (DT) lines the (2S)-2-hydroxy-3-oxobutyl phosphate pocket. The Proton donor role is filled by His-93. Phe-118 contributes to the 5-amino-6-(D-ribitylamino)uracil binding site. Residue Arg-132 coordinates (2S)-2-hydroxy-3-oxobutyl phosphate.

This sequence belongs to the DMRL synthase family.

It catalyses the reaction (2S)-2-hydroxy-3-oxobutyl phosphate + 5-amino-6-(D-ribitylamino)uracil = 6,7-dimethyl-8-(1-D-ribityl)lumazine + phosphate + 2 H2O + H(+). The protein operates within cofactor biosynthesis; riboflavin biosynthesis; riboflavin from 2-hydroxy-3-oxobutyl phosphate and 5-amino-6-(D-ribitylamino)uracil: step 1/2. In terms of biological role, catalyzes the formation of 6,7-dimethyl-8-ribityllumazine by condensation of 5-amino-6-(D-ribitylamino)uracil with 3,4-dihydroxy-2-butanone 4-phosphate. This is the penultimate step in the biosynthesis of riboflavin. The protein is 6,7-dimethyl-8-ribityllumazine synthase of Synechococcus sp. (strain CC9605).